We begin with the raw amino-acid sequence, 151 residues long: SsrA-binding protein (151 aa).

Belongs to the SmpB family.

The protein resides in the cytoplasm. Functionally, required for rescue of stalled ribosomes mediated by trans-translation. Binds to transfer-messenger RNA (tmRNA), required for stable association of tmRNA with ribosomes. tmRNA and SmpB together mimic tRNA shape, replacing the anticodon stem-loop with SmpB. tmRNA is encoded by the ssrA gene; the 2 termini fold to resemble tRNA(Ala) and it encodes a 'tag peptide', a short internal open reading frame. During trans-translation Ala-aminoacylated tmRNA acts like a tRNA, entering the A-site of stalled ribosomes, displacing the stalled mRNA. The ribosome then switches to translate the ORF on the tmRNA; the nascent peptide is terminated with the 'tag peptide' encoded by the tmRNA and targeted for degradation. The ribosome is freed to recommence translation, which seems to be the essential function of trans-translation. The protein is SsrA-binding protein of Nitrosomonas europaea (strain ATCC 19718 / CIP 103999 / KCTC 2705 / NBRC 14298).